We begin with the raw amino-acid sequence, 322 residues long: Methionyl-tRNA formyltransferase (322 aa).

112-115 (SLLP) contributes to the (6S)-5,6,7,8-tetrahydrofolate binding site.

Belongs to the Fmt family.

The catalysed reaction is L-methionyl-tRNA(fMet) + (6R)-10-formyltetrahydrofolate = N-formyl-L-methionyl-tRNA(fMet) + (6S)-5,6,7,8-tetrahydrofolate + H(+). In terms of biological role, attaches a formyl group to the free amino group of methionyl-tRNA(fMet). The formyl group appears to play a dual role in the initiator identity of N-formylmethionyl-tRNA by promoting its recognition by IF2 and preventing the misappropriation of this tRNA by the elongation apparatus. This Synechococcus sp. (strain JA-3-3Ab) (Cyanobacteria bacterium Yellowstone A-Prime) protein is Methionyl-tRNA formyltransferase.